Here is a 559-residue protein sequence, read N- to C-terminus: Glutamine--tRNA ligase (559 aa).

The 'HIGH' region motif lies at 44 to 54; that stretch reads PEPNGYLHIGH. ATP-binding positions include 45–47 and 51–57; these read EPN and HIGHAKS. The L-glutamine site is built by aspartate 77 and tyrosine 222. Residues threonine 241 and 272 to 273 each bind ATP; that span reads RL. Positions 279–283 match the 'KMSKS' region motif; it reads LTSKR.

This sequence belongs to the class-I aminoacyl-tRNA synthetase family. In terms of assembly, monomer.

It is found in the cytoplasm. It catalyses the reaction tRNA(Gln) + L-glutamine + ATP = L-glutaminyl-tRNA(Gln) + AMP + diphosphate. This chain is Glutamine--tRNA ligase, found in Actinobacillus succinogenes (strain ATCC 55618 / DSM 22257 / CCUG 43843 / 130Z).